We begin with the raw amino-acid sequence, 478 residues long: Cytochrome c-552 (478 aa).

The first 26 residues, 1 to 26 (MARKTLRARRFFSLIFPFFFITSVYA), serve as a signal peptide directing secretion. Histidine 94 provides a ligand contact to heme c. Residues cysteine 122, cysteine 125, and lysine 126 each coordinate heme. The heme c site is built by cysteine 160, cysteine 163, histidine 164, cysteine 209, cysteine 212, and histidine 213. Ca(2+) is bound by residues glutamate 215, tyrosine 216, lysine 261, and glutamine 263. Residue tyrosine 216 participates in substrate binding. Residue histidine 264 coordinates substrate. 9 residues coordinate heme c: histidine 275, cysteine 282, cysteine 285, histidine 286, histidine 301, cysteine 314, cysteine 317, histidine 318, and histidine 393.

It belongs to the cytochrome c-552 family. Ca(2+) serves as cofactor. Heme c is required as a cofactor.

The protein localises to the periplasm. It carries out the reaction 6 Fe(III)-[cytochrome c] + NH4(+) + 2 H2O = 6 Fe(II)-[cytochrome c] + nitrite + 8 H(+). It participates in nitrogen metabolism; nitrate reduction (assimilation). Catalyzes the reduction of nitrite to ammonia, consuming six electrons in the process. This Salmonella typhi protein is Cytochrome c-552.